Reading from the N-terminus, the 172-residue chain is Ribosome maturation factor RimM (172 aa).

A PRC barrel domain is found at 95-168 (AEGEFYYHQI…RVDVEIMEGL (74 aa)).

It belongs to the RimM family. As to quaternary structure, binds ribosomal protein uS19.

It localises to the cytoplasm. In terms of biological role, an accessory protein needed during the final step in the assembly of 30S ribosomal subunit, possibly for assembly of the head region. Essential for efficient processing of 16S rRNA. May be needed both before and after RbfA during the maturation of 16S rRNA. It has affinity for free ribosomal 30S subunits but not for 70S ribosomes. The sequence is that of Ribosome maturation factor RimM from Streptococcus equi subsp. zooepidemicus (strain MGCS10565).